The following is a 165-amino-acid chain: MRVLGIDPGIATLGYGVVEYKNNKFSPIVYGAITTDAGVDKAFRLYTLYKGLEDIIKLYRPEIVAIEELFYNKNSKTVITIGEVRGISILAAVNSGVKVYEYTPLQVKQAVVGYGRAEKQQVQQMVKVLLNLDEIPKPDDVADALAVAICHCHSNNMLERLGYGR.

Residues Asp-7, Glu-67, and Asp-140 contribute to the active site. The Mg(2+) site is built by Asp-7, Glu-67, and Asp-140.

This sequence belongs to the RuvC family. As to quaternary structure, homodimer which binds Holliday junction (HJ) DNA. The HJ becomes 2-fold symmetrical on binding to RuvC with unstacked arms; it has a different conformation from HJ DNA in complex with RuvA. In the full resolvosome a probable DNA-RuvA(4)-RuvB(12)-RuvC(2) complex forms which resolves the HJ. Mg(2+) is required as a cofactor.

Its subcellular location is the cytoplasm. It carries out the reaction Endonucleolytic cleavage at a junction such as a reciprocal single-stranded crossover between two homologous DNA duplexes (Holliday junction).. Functionally, the RuvA-RuvB-RuvC complex processes Holliday junction (HJ) DNA during genetic recombination and DNA repair. Endonuclease that resolves HJ intermediates. Cleaves cruciform DNA by making single-stranded nicks across the HJ at symmetrical positions within the homologous arms, yielding a 5'-phosphate and a 3'-hydroxyl group; requires a central core of homology in the junction. The consensus cleavage sequence is 5'-(A/T)TT(C/G)-3'. Cleavage occurs on the 3'-side of the TT dinucleotide at the point of strand exchange. HJ branch migration catalyzed by RuvA-RuvB allows RuvC to scan DNA until it finds its consensus sequence, where it cleaves and resolves the cruciform DNA. This Caldanaerobacter subterraneus subsp. tengcongensis (strain DSM 15242 / JCM 11007 / NBRC 100824 / MB4) (Thermoanaerobacter tengcongensis) protein is Crossover junction endodeoxyribonuclease RuvC.